Here is a 208-residue protein sequence, read N- to C-terminus: Putative thymidylate kinase (208 aa).

The segment at 8-15 (GIDGSGVS) is defective ATP-binding.

Belongs to the thymidylate kinase family.

It catalyses the reaction dTMP + ATP = dTDP + ADP. This chain is Putative thymidylate kinase (tmk), found in Aeropyrum pernix (strain ATCC 700893 / DSM 11879 / JCM 9820 / NBRC 100138 / K1).